The primary structure comprises 124 residues: Large ribosomal subunit protein bL12 (124 aa).

The protein belongs to the bacterial ribosomal protein bL12 family. Homodimer. Part of the ribosomal stalk of the 50S ribosomal subunit. Forms a multimeric L10(L12)X complex, where L10 forms an elongated spine to which 2 to 4 L12 dimers bind in a sequential fashion. Binds GTP-bound translation factors.

Its function is as follows. Forms part of the ribosomal stalk which helps the ribosome interact with GTP-bound translation factors. Is thus essential for accurate translation. This is Large ribosomal subunit protein bL12 from Mycoplasma mobile (strain ATCC 43663 / 163K / NCTC 11711) (Mesomycoplasma mobile).